The chain runs to 631 residues: tRNA 5-methylaminomethyl-2-thiouridine biosynthesis bifunctional protein MnmC (631 aa).

The tRNA (mnm(5)s(2)U34)-methyltransferase stretch occupies residues 1–243; it reads MITDLRPPAM…KREMLTGRLP (243 aa). An FAD-dependent cmnm(5)s(2)U34 oxidoreductase region spans residues 261–631; sequence IGAGIAGAAL…GRLYRNQLTV (371 aa).

The protein in the N-terminal section; belongs to the methyltransferase superfamily. tRNA (mnm(5)s(2)U34)-methyltransferase family. This sequence in the C-terminal section; belongs to the DAO family. FAD serves as cofactor.

It localises to the cytoplasm. The enzyme catalyses 5-aminomethyl-2-thiouridine(34) in tRNA + S-adenosyl-L-methionine = 5-methylaminomethyl-2-thiouridine(34) in tRNA + S-adenosyl-L-homocysteine + H(+). Functionally, catalyzes the last two steps in the biosynthesis of 5-methylaminomethyl-2-thiouridine (mnm(5)s(2)U) at the wobble position (U34) in tRNA. Catalyzes the FAD-dependent demodification of cmnm(5)s(2)U34 to nm(5)s(2)U34, followed by the transfer of a methyl group from S-adenosyl-L-methionine to nm(5)s(2)U34, to form mnm(5)s(2)U34. The sequence is that of tRNA 5-methylaminomethyl-2-thiouridine biosynthesis bifunctional protein MnmC from Marinobacter nauticus (strain ATCC 700491 / DSM 11845 / VT8) (Marinobacter aquaeolei).